Reading from the N-terminus, the 1332-residue chain is SAGA complex subunit SPT7 (1332 aa).

Threonine 78 carries the post-translational modification Phosphothreonine; by ATM or ATR. 3 disordered regions span residues 80–118 (EEEH…ISNE), 209–268 (VEEK…ISSS), and 331–384 (IEKG…PKQS). Position 88 is a phosphoserine (serine 88). The segment covering 106 to 118 (NNNTNTNTSISNE) has biased composition (low complexity). The span at 217-233 (IGKNEKPQNKEGISKFA) shows a compositional bias: basic and acidic residues. Over residues 234 to 249 (EDEDYDDEDENYDEDS) the composition is skewed to acidic residues. Residues 250–260 (TDVKNVDDPPK) show a composition bias toward basic and acidic residues. A compositionally biased stretch (acidic residues) spans 345 to 360 (AATDEQDRENTNDEPD). A compositionally biased stretch (polar residues) spans 362–376 (NQKLPTPEGSTFSDT). Residues 440–546 (IGQEELYEAC…KKSLQLIRMI (107 aa)) form the Bromo domain. Over residues 566–578 (KDKDYELDEEEEV) the composition is skewed to acidic residues. Disordered stretches follow at residues 566–724 (KDKD…YLLE) and 1286–1332 (GAEN…RLNQ). Composition is skewed to basic and acidic residues over residues 593 to 634 (LAKE…KDKT) and 644 to 697 (NVNK…KEAG). Residues 698 to 716 (ENNEEEEDDDDEDEDEDMV) show a composition bias toward acidic residues. Serine 1293 carries the post-translational modification Phosphoserine. Residues 1316-1332 (NMGSNSSFSLSLPRLNQ) show a composition bias toward polar residues.

Component of the 1.8 MDa SAGA (Spt-Ada-Gcn5 acetyltransferase) complex, which is composed of 19 subunits TRA1, SPT7, TAF5, NGG1/ADA3, SGF73, SPT20/ADA5, SPT8, TAF12, TAF6, HFI1/ADA1, UBP8, GCN5, ADA2, SPT3, SGF29, TAF10, TAF9, SGF11 and SUS1. The SAGA complex is composed of 4 modules, namely the HAT (histone acetyltransferase) module (GCN5, ADA2, NGG1/ADA3 and SGF29), the DUB (deubiquitinating) module (UBP8, SGF11, SGF73 and SUS1), the core or TAF (TBP-associated factor) module (TAF5, TAF6, TAF9, TAF10 and TAF12), and the Tra1 or SPT (Suppressor of Ty) module (TRA1, HFI1/ADA1, SPT3, SPT7, SPT8 and SPT20/ADA5). The Tra1/SPT module binds activators, the core module recruits TBP (TATA-binding protein), the HAT module contains the histone H3 acetyltransferase GCN5, and the DUB module comprises the histone H2B deubiquitinase UBP8. Also identified in an altered form of SAGA, named SALSA (SAGA altered, Spt8 absent) or SLIK (SAGA-like) complex, which contains a C-terminal truncated form of SPT7 and is missing SPT8. However, it has been shown that the SAGA and SAGA-like SALSA/SLIK transcriptional coactivators are structurally and biochemically equivalent. Identified in the Ada.spt complex with NGG1/ADA3 and TRA1. Post-translationally, protease PEP4 directly cleaves the C-terminus of SPT7(SAGA) to form SPT7(SLIK) within the SAGA complex in the nucleus.

It is found in the nucleus. Its function is as follows. Component of the transcription coactivator SAGA complex. SAGA acts as a general cofactor required for essentially all RNA polymerase II transcription. At the promoters, SAGA is required for transcription pre-initiation complex (PIC) recruitment. It influences RNA polymerase II transcriptional activity through different activities such as TBP interaction (via core/TAF module) and promoter selectivity, interaction with transcription activators (via Tra1/SPT module), and chromatin modification through histone acetylation (via HAT module) and deubiquitination (via DUB module). SAGA preferentially acetylates histones H3 (to form H3K9ac, H3K14ac, H3K18ac and H3K23ac) and H2B and deubiquitinates histone H2B. SAGA interacts with DNA via upstream activating sequences (UASs). Also identified in a modified version of SAGA named SALSA or SLIK. The cleavage of SPT7 and the absence of the SPT8 subunit in SLIK neither drive any major conformational differences in its structure compared with SAGA, nor significantly affect HAT, DUB, or DNA-binding activities. The protein is SAGA complex subunit SPT7 (SPT7) of Saccharomyces cerevisiae (strain ATCC 204508 / S288c) (Baker's yeast).